Here is a 184-residue protein sequence, read N- to C-terminus: Lysozyme 1 (184 aa).

Positions 1–20 are cleaved as a signal peptide; that stretch reads MNGLILFCAVVFATAVCTYG. The region spanning 69–184 is the I-type lysozyme domain; sequence TGMVSQQCLR…WRRVQAQGCN (116 aa). 6 disulfide bridges follow: Cys76-Cys152, Cys81-Cys87, Cys92-Cys101, Cys114-Cys134, Cys124-Cys130, and Cys148-Cys166. The Proton donor role is filled by Glu84. Asp95 serves as the catalytic Nucleophile. 107-113 is a binding site for substrate; sequence KRAYWID. Residues Tyr138 and 159–161 contribute to the substrate site; that span reads HNG.

As to expression, hemolymph, labial palps, non-vesiculated cells of mantle connective tissue, cells of interlamellar junctions and epithelia surrounding the water tubes of the gills.

It localises to the secreted. The catalysed reaction is Hydrolysis of (1-&gt;4)-beta-linkages between N-acetylmuramic acid and N-acetyl-D-glucosamine residues in a peptidoglycan and between N-acetyl-D-glucosamine residues in chitodextrins.. Functionally, has antibacterial activity against the Gram-positive bacteria L.garvieae, M.luteus and Enterococcus sp., and the Gram-negative bacteria E.coli and V.vulnificus. Weak antibacterial activity against the Gram-negative bacterium A.hydrophila. No antibacterial activity detected against the Gram-positive bacterium S.iniae or against the Gram-negative bacterium E.ictaluri. Shows some chitinase activity but no isopeptidase activity. This chain is Lysozyme 1, found in Crassostrea virginica (Eastern oyster).